Consider the following 780-residue polypeptide: Chloride channel protein CLC-b (780 aa).

The interval 1–28 (MVEEDLNQIGGNSNYNGEGGDPESNTLN) is disordered. A run of 12 helical transmembrane segments spans residues 87–107 (TLAC…NLAV), 130–150 (GLMV…VLCV), 177–197 (FGAT…AAGL), 205–225 (LVHI…DNHR), 247–267 (GSAA…LFAL), 277–297 (ALLW…REFI), 327–347 (VTDI…GSLY), 370–390 (VLLS…LPFL), 452–472 (MGSL…TFGI), 477–497 (GLFL…GAAM), 509–529 (AVLG…SLCV), and 530–550 (IFLE…VLLI). CBS domains lie at 594-663 (AKPP…FLTE) and 708-770 (TNTT…AFPL). The chain crosses the membrane as a helical span at residues 735 to 755 (HLLIVPKIQASGMCPVVGILT).

It belongs to the chloride channel (TC 2.A.49) family. Homodimer. Interacts with PP2A5. As to expression, broadly expressed in the plant.

It localises to the membrane. Its function is as follows. Voltage-gated chloride channel. This is Chloride channel protein CLC-b (CLC-B) from Arabidopsis thaliana (Mouse-ear cress).